Here is a 133-residue protein sequence, read N- to C-terminus: Small ribosomal subunit protein uS9 (133 aa).

The protein belongs to the universal ribosomal protein uS9 family.

The chain is Small ribosomal subunit protein uS9 from Picrophilus torridus (strain ATCC 700027 / DSM 9790 / JCM 10055 / NBRC 100828 / KAW 2/3).